The chain runs to 337 residues: Putative carboxypeptidase TP_0688 (337 aa).

The active-site Nucleophile is serine 118. Active-site charge relay system residues include glutamate 234 and histidine 302.

This sequence belongs to the peptidase S66 family.

In Treponema pallidum (strain Nichols), this protein is Putative carboxypeptidase TP_0688.